A 262-amino-acid chain; its full sequence is GTP cyclohydrolase 1 type 2 homolog (262 aa).

His65, Asp102, His222, and Glu225 together coordinate a divalent metal cation.

It belongs to the GTP cyclohydrolase I type 2/NIF3 family. In terms of assembly, homohexamer.

The polypeptide is GTP cyclohydrolase 1 type 2 homolog (Streptococcus pyogenes serotype M6 (strain ATCC BAA-946 / MGAS10394)).